We begin with the raw amino-acid sequence, 698 residues long: Polyphosphate kinase (698 aa).

N63 contacts ATP. Residues R390 and R420 each contribute to the Mg(2+) site. H450 serves as the catalytic Phosphohistidine intermediate. Positions 483, 579, and 607 each coordinate ATP.

This sequence belongs to the polyphosphate kinase 1 (PPK1) family. Mg(2+) serves as cofactor. Post-translationally, an intermediate of this reaction is the autophosphorylated ppk in which a phosphate is covalently linked to a histidine residue through a N-P bond.

It catalyses the reaction [phosphate](n) + ATP = [phosphate](n+1) + ADP. Its function is as follows. Catalyzes the reversible transfer of the terminal phosphate of ATP to form a long-chain polyphosphate (polyP). This chain is Polyphosphate kinase, found in Xylella fastidiosa (strain 9a5c).